The primary structure comprises 118 residues: Large ribosomal subunit protein bL20c (118 aa).

It belongs to the bacterial ribosomal protein bL20 family.

It is found in the plastid. In terms of biological role, binds directly to 23S ribosomal RNA and is necessary for the in vitro assembly process of the 50S ribosomal subunit. It is not involved in the protein synthesizing functions of that subunit. The sequence is that of Large ribosomal subunit protein bL20c from Aneura mirabilis (Parasitic liverwort).